The following is a 281-amino-acid chain: Pantothenate synthetase (281 aa).

31-38 lines the ATP pocket; that stretch reads MGNLHAGH. His38 functions as the Proton donor in the catalytic mechanism. (R)-pantoate is bound at residue Gln62. Gln62 contributes to the beta-alanine binding site. 150–153 contributes to the ATP binding site; it reads GKKD. Residue Gln156 coordinates (R)-pantoate. ATP contacts are provided by residues Val179 and 187–190; that span reads MSSR.

Belongs to the pantothenate synthetase family. As to quaternary structure, homodimer.

It localises to the cytoplasm. It carries out the reaction (R)-pantoate + beta-alanine + ATP = (R)-pantothenate + AMP + diphosphate + H(+). It participates in cofactor biosynthesis; (R)-pantothenate biosynthesis; (R)-pantothenate from (R)-pantoate and beta-alanine: step 1/1. Catalyzes the condensation of pantoate with beta-alanine in an ATP-dependent reaction via a pantoyl-adenylate intermediate. This Xylella fastidiosa (strain M12) protein is Pantothenate synthetase.